A 766-amino-acid polypeptide reads, in one-letter code: Protein translocase subunit SecA 2 (766 aa).

ATP contacts are provided by residues Gln84, 102-106 (GEGKT), and Asp490.

It belongs to the SecA family. As to quaternary structure, monomer and homodimer. Part of the essential Sec protein translocation apparatus which comprises SecA, SecYEG and auxiliary proteins SecDF. Other proteins may also be involved.

It localises to the cell membrane. It is found in the cytoplasm. It catalyses the reaction ATP + H2O + cellular proteinSide 1 = ADP + phosphate + cellular proteinSide 2.. Its function is as follows. Part of the Sec protein translocase complex. Interacts with the SecYEG preprotein conducting channel. Has a central role in coupling the hydrolysis of ATP to the transfer of proteins into and across the cell membrane, serving as an ATP-driven molecular motor driving the stepwise translocation of polypeptide chains across the membrane. This Thermobifida fusca (strain YX) protein is Protein translocase subunit SecA 2.